A 640-amino-acid chain; its full sequence is Threonine--tRNA ligase (640 aa).

A TGS domain is found at 1–61 (MPVITLPDGS…SNDATLQIIT (61 aa)). A catalytic region spans residues 242–533 (DHRKIGKQLD…LIEHYAGVFP (292 aa)). 3 residues coordinate Zn(2+): Cys333, His384, and His510.

This sequence belongs to the class-II aminoacyl-tRNA synthetase family. In terms of assembly, homodimer. It depends on Zn(2+) as a cofactor.

Its subcellular location is the cytoplasm. The enzyme catalyses tRNA(Thr) + L-threonine + ATP = L-threonyl-tRNA(Thr) + AMP + diphosphate + H(+). Its function is as follows. Catalyzes the attachment of threonine to tRNA(Thr) in a two-step reaction: L-threonine is first activated by ATP to form Thr-AMP and then transferred to the acceptor end of tRNA(Thr). Also edits incorrectly charged L-seryl-tRNA(Thr). This is Threonine--tRNA ligase from Pseudomonas putida (strain GB-1).